Here is a 224-residue protein sequence, read N- to C-terminus: Adenylate kinase (224 aa).

10 to 15 (GSGKGT) contributes to the ATP binding site. The interval 30–59 (ESGAIFRENISKGTELGAKAKEYIDRGDLV) is NMP. Residues S31, R36, 57–59 (DLV), 85–88 (GFPR), and Q92 each bind AMP. Positions 126–165 (GRRLCVNDNNHPNNIFIDAIKPDGDKCRVCGGELKTRSDD) are LID. R127 is an ATP binding site. AMP-binding residues include R162 and R174. An ATP-binding site is contributed by P211.

This sequence belongs to the adenylate kinase family. As to quaternary structure, monomer.

It is found in the cytoplasm. The catalysed reaction is AMP + ATP = 2 ADP. Its pathway is purine metabolism; AMP biosynthesis via salvage pathway; AMP from ADP: step 1/1. Catalyzes the reversible transfer of the terminal phosphate group between ATP and AMP. Plays an important role in cellular energy homeostasis and in adenine nucleotide metabolism. This is Adenylate kinase from Desulfosudis oleivorans (strain DSM 6200 / JCM 39069 / Hxd3) (Desulfococcus oleovorans).